A 228-amino-acid chain; its full sequence is Cytochrome b6-f complex iron-sulfur subunit 1, chloroplastic (228 aa).

A chloroplast-targeting transit peptide spans 1 to 49 (MASSTLSPVTQLCSSKSGLSSVSQCLLVKPMKINSHGLGKDKRMKVKCM). The chain crosses the membrane as a helical span at residues 72 to 92 (LLGALSLPTAGMLVPYGTFFV). A Rieske domain is found at 115–211 (ASEWLKTHPP…ADIDDGKVVF (97 aa)). [2Fe-2S] cluster-binding residues include cysteine 157, histidine 159, cysteine 175, and histidine 178. The cysteines at positions 162 and 177 are disulfide-linked.

Belongs to the Rieske iron-sulfur protein family. As to quaternary structure, the 4 large subunits of the cytochrome b6-f complex are cytochrome b6, subunit IV (17 kDa polypeptide, petD), cytochrome f and the Rieske protein, while the 4 small subunits are petG, petL, petM and petN. The complex functions as a dimer. Requires [2Fe-2S] cluster as cofactor.

It localises to the plastid. It is found in the chloroplast thylakoid membrane. The catalysed reaction is 2 oxidized [plastocyanin] + a plastoquinol + 2 H(+)(in) = 2 reduced [plastocyanin] + a plastoquinone + 4 H(+)(out). Functionally, component of the cytochrome b6-f complex, which mediates electron transfer between photosystem II (PSII) and photosystem I (PSI), cyclic electron flow around PSI, and state transitions. The sequence is that of Cytochrome b6-f complex iron-sulfur subunit 1, chloroplastic (petC1) from Nicotiana tabacum (Common tobacco).